We begin with the raw amino-acid sequence, 137 residues long: MKKKKTYGEVYALGQYISMSAPKARRVIDQIRGRSYEETLMLLALMPYRACDPILKLVNSAAANARHNMSFNEATLVISKAEVNEGTTVKKLKPRARGRSYPIRRPTCHIRIVLQDTSFDEFEEDFFSLKKDAWEKK.

It belongs to the universal ribosomal protein uL22 family. As to quaternary structure, part of the 50S ribosomal subunit.

It localises to the plastid. It is found in the chloroplast. Functionally, this protein binds specifically to 23S rRNA. Its function is as follows. The globular domain of the protein is located near the polypeptide exit tunnel on the outside of the subunit, while an extended beta-hairpin is found that lines the wall of the exit tunnel in the center of the 70S ribosome. This Oenothera argillicola (Appalachian evening primrose) protein is Large ribosomal subunit protein uL22c (rpl22).